Consider the following 195-residue polypeptide: uncharacterized protein (195 aa).

The HD domain maps to 24–141; that stretch reads NTDENLKLIF…VFLADKISWD (118 aa).

This is an uncharacterized protein from Lactococcus lactis subsp. cremoris (Streptococcus cremoris).